The following is a 205-amino-acid chain: Beta-crystallin B2 (205 aa).

A2 carries the post-translational modification N-acetylalanine. Residues 2 to 16 (ASDHQTQAGKPQSLN) are N-terminal arm. 2 Beta/gamma crystallin 'Greek key' domains span residues 17-56 (PKIIIFEQENFQGHSHELNGPCPNLKETGVEKAGSVLVQA) and 57-101 (GPWV…RPIK). The interval 102-106 (VDSQE) is connecting peptide. 2 Beta/gamma crystallin 'Greek key' domains span residues 107-148 (HKII…RVQS) and 149-191 (GTWV…RRIR). The tract at residues 193–205 (MQWHQRGAFHPSN) is C-terminal arm.

The protein belongs to the beta/gamma-crystallin family. As to quaternary structure, homo/heterodimer, or complexes of higher-order. The structure of beta-crystallin oligomers seems to be stabilized through interactions between the N-terminal arms.

Its function is as follows. Crystallins are the dominant structural components of the vertebrate eye lens. The sequence is that of Beta-crystallin B2 (CRYBB2) from Homo sapiens (Human).